The primary structure comprises 83 residues: MQNDAGEFVDLYVPRKCSASNRIIGAKDHASIQINIAEVDKVTGRFNGQFKTYAICGAIRRMGEADDSLLRLAKNDSIVSKNI.

It belongs to the eukaryotic ribosomal protein eS21 family. Component of the 40S small ribosomal subunit.

It localises to the cytoplasm. Its subcellular location is the cytosol. The protein resides in the rough endoplasmic reticulum. Its function is as follows. Component of the small ribosomal subunit. The ribosome is a large ribonucleoprotein complex responsible for the synthesis of proteins in the cell. The chain is Small ribosomal subunit protein eS21 (rps21) from Ictalurus punctatus (Channel catfish).